A 381-amino-acid polypeptide reads, in one-letter code: 5-amino-6-(D-ribitylamino)uracil--L-tyrosine 4-hydroxyphenyl transferase (381 aa).

The region spanning 59-306 (VTYVVNRNIN…TAVARIFLGN (248 aa)) is the Radical SAM core domain. Residues C73, C77, and C80 each contribute to the [4Fe-4S] cluster site.

This sequence belongs to the radical SAM superfamily. CofH family. As to quaternary structure, consists of two subunits, CofG and CofH. The cofactor is [4Fe-4S] cluster.

It carries out the reaction 5-amino-6-(D-ribitylamino)uracil + L-tyrosine + S-adenosyl-L-methionine = 5-amino-5-(4-hydroxybenzyl)-6-(D-ribitylimino)-5,6-dihydrouracil + 2-iminoacetate + 5'-deoxyadenosine + L-methionine + H(+). It functions in the pathway cofactor biosynthesis; coenzyme F0 biosynthesis. Functionally, catalyzes the radical-mediated synthesis of 5-amino-5-(4-hydroxybenzyl)-6-(D-ribitylimino)-5,6-dihydrouracil from 5-amino-6-(D-ribitylamino)uracil and L-tyrosine. This Cyanothece sp. (strain PCC 7425 / ATCC 29141) protein is 5-amino-6-(D-ribitylamino)uracil--L-tyrosine 4-hydroxyphenyl transferase.